Here is a 245-residue protein sequence, read N- to C-terminus: Tetraspanin-6 (245 aa).

Topologically, residues 1-19 are cytoplasmic; sequence MASPSRRLQTKPVITCFKS. The chain crosses the membrane as a helical span at residues 20–40; sequence VLLIYTFIFWITGVILLAVGI. The Extracellular portion of the chain corresponds to 41–59; it reads WGKVSLENYFSLLNEKATN. The chain crosses the membrane as a helical span at residues 60–80; sequence VPFVLIATGTVIILLGTFGCF. The Cytoplasmic portion of the chain corresponds to 81-93; it reads ATCRASAWMLKLY. Residues 94 to 114 form a helical membrane-spanning segment; that stretch reads AMFLTLVFLVELVAAIVGFVF. The Extracellular portion of the chain corresponds to 115–208; sequence RHEIKNSFKN…IKVMTIIESE (94 aa). N134 is a glycosylation site (N-linked (GlcNAc...) asparagine). A helical membrane pass occupies residues 209-229; it reads MGVVAGISFGVACFQLIGIFL. Topologically, residues 230–245 are cytoplasmic; the sequence is AYCLSRAITNNQYEIV.

It belongs to the tetraspanin (TM4SF) family.

Its subcellular location is the membrane. In Homo sapiens (Human), this protein is Tetraspanin-6 (TSPAN6).